We begin with the raw amino-acid sequence, 20 residues long: Protein PR-L1 (20 aa).

Belongs to the BetVI family.

The protein is Protein PR-L1 of Lupinus luteus (European yellow lupine).